A 413-amino-acid polypeptide reads, in one-letter code: Lysosomal phospholipase A and acyltransferase (413 aa).

An N-terminal signal peptide occupies residues 1 to 33 (MDRHLCICREIQLRSGLLFPFLLLMMLADLALP). Position 46 (aspartate 46) interacts with substrate. A disulfide bridge connects residues cysteine 65 and cysteine 89. Asparagine 99 carries N-linked (GlcNAc...) asparagine glycosylation. The active-site Acyl-ester intermediate is the serine 198. Position 198 (serine 198) interacts with Zn(2+). Methionine 199 provides a ligand contact to substrate. Asparagine 273 and asparagine 289 each carry an N-linked (GlcNAc...) asparagine glycan. Cysteine 355 lines the Zn(2+) pocket. Active-site charge relay system residues include aspartate 360 and histidine 392. A Zn(2+)-binding site is contributed by histidine 392. Asparagine 398 carries an N-linked (GlcNAc...) asparagine glycan.

This sequence belongs to the AB hydrolase superfamily. Lipase family. Post-translationally, N-glycosylated. N-glycosylation is important for maturation of the enzyme and normal subcellular location. Detected in alveolar macrophages (at protein level). Widely expressed. Expressed at highest levels in alveolar macrophages.

Its subcellular location is the lysosome. The protein localises to the secreted. It localises to the membrane. It catalyses the reaction a 1,2-diacyl-sn-glycero-3-phosphocholine + H2O = a 2-acyl-sn-glycero-3-phosphocholine + a fatty acid + H(+). It carries out the reaction 1,2-dihexadecanoyl-sn-glycero-3-phosphocholine + H2O = 2-hexadecanoyl-sn-glycero-3-phosphocholine + hexadecanoate + H(+). The catalysed reaction is 1-hexadecanoyl-2-(9Z-octadecenoyl)-sn-glycero-3-phosphocholine + H2O = 2-(9Z-octadecenoyl)-sn-glycero-3-phosphocholine + hexadecanoate + H(+). The enzyme catalyses 1,2-di-(9Z-octadecenoyl)-sn-glycero-3-phosphocholine + H2O = 2-(9Z-octadecenoyl)-sn-glycero-3-phosphocholine + (9Z)-octadecenoate + H(+). It catalyses the reaction 1-hexadecanoyl-2-glutaroyl-sn-glycero-3-phosphocholine + H2O = 2-glutaroyl-sn-glycero-3-phosphocholine + hexadecanoate + H(+). It carries out the reaction 1-hexadecanoyl-2-nonadioyl-sn-glycero-3-phosphocholine + H2O = 2-nonadioyl-sn-glycero-3-phosphocholine + hexadecanoate + H(+). The catalysed reaction is 1-hexadecanoyl-2-(5-oxopentanoyl)-sn-glycero-3-phosphocholine + H2O = 2-(5-oxopentanoyl)-sn-glycero-3-phosphocholine + hexadecanoate + H(+). The enzyme catalyses 1-hexadecanoyl-2-(9-oxononanoyl)-sn-glycero-3-phosphocholine + H2O = 2-(9-oxononanoyl)-sn-glycero-3-phosphocholine + hexadecanoate + H(+). It catalyses the reaction a 1,2-diacyl-sn-glycero-3-phosphocholine + H2O = a 1-acyl-sn-glycero-3-phosphocholine + a fatty acid + H(+). It carries out the reaction 1,2-dihexadecanoyl-sn-glycero-3-phosphocholine + H2O = 1-hexadecanoyl-sn-glycero-3-phosphocholine + hexadecanoate + H(+). The catalysed reaction is 1-hexadecanoyl-2-(9Z-octadecenoyl)-sn-glycero-3-phosphocholine + H2O = 1-hexadecanoyl-sn-glycero-3-phosphocholine + (9Z)-octadecenoate + H(+). The enzyme catalyses 1,2-di-(9Z-octadecenoyl)-sn-glycero-3-phosphocholine + H2O = 1-(9Z-octadecenoyl)-sn-glycero-3-phosphocholine + (9Z)-octadecenoate + H(+). It catalyses the reaction a 1-acyl-sn-glycero-3-phosphocholine + H2O = sn-glycerol 3-phosphocholine + a fatty acid + H(+). It carries out the reaction 1-hexadecanoyl-sn-glycero-3-phosphocholine + H2O = sn-glycerol 3-phosphocholine + hexadecanoate + H(+). The catalysed reaction is N-(acetyl)-sphing-4-enine + a 1,2-diacyl-sn-glycero-3-phosphoethanolamine = 1-O-acyl-N-(acetyl)-sphing-4-enine + a 2-acyl-sn-glycero-3-phosphoethanolamine. The enzyme catalyses 1-hexadecanoyl-2-(9Z-octadecenoyl)-sn-glycero-3-phosphoethanolamine + N-(acetyl)-sphing-4-enine = 2-(9Z-octadecenoyl)-sn-glycero-3-phosphoethanolamine + 1-hexadecanoyl-N-(acetyl)-sphing-4-enine. It catalyses the reaction 1-hexadecanoyl-2-(9Z,12Z-octadecadienoyl)-sn-glycero-3-phosphoethanolamine + N-(acetyl)-sphing-4-enine = 2-(9Z,12Z)-octadecadienoyl-sn-glycero-3-phosphoethanolamine + 1-hexadecanoyl-N-(acetyl)-sphing-4-enine. It carries out the reaction 1-hexadecanoyl-2-(5Z,8Z,11Z,14Z-eicosatetraenoyl)-sn-glycero-3-phosphoethanolamine + N-(acetyl)-sphing-4-enine = 2-(5Z,8Z,11Z,14Z)-eicosatetraenoyl-sn-glycero-3-phosphoethanolamine + 1-hexadecanoyl-N-(acetyl)-sphing-4-enine. The catalysed reaction is N-(acetyl)-sphing-4-enine + a 1,2-diacyl-sn-glycero-3-phosphoethanolamine = 1-O-acyl-N-(acetyl)-sphing-4-enine + a 1-acyl-sn-glycero-3-phosphoethanolamine. The enzyme catalyses 1-hexadecanoyl-2-(9Z-octadecenoyl)-sn-glycero-3-phosphoethanolamine + N-(acetyl)-sphing-4-enine = 1-(9Z-octadecenoyl)-N-(acetyl)-sphing-4-enine + 1-hexadecanoyl-sn-glycero-3-phosphoethanolamine. It catalyses the reaction 1-hexadecanoyl-2-(9Z,12Z-octadecadienoyl)-sn-glycero-3-phosphoethanolamine + N-(acetyl)-sphing-4-enine = 1-(9Z,12Z-octadecadienoyl)-N-acetylsphing-4-enine + 1-hexadecanoyl-sn-glycero-3-phosphoethanolamine. It carries out the reaction 1-hexadecanoyl-2-(5Z,8Z,11Z,14Z-eicosatetraenoyl)-sn-glycero-3-phosphoethanolamine + N-(acetyl)-sphing-4-enine = 1-(5Z,8Z,11Z,14Z)-eicosatetraenoyl-N-(acetyl)-sphing-4-enine + 1-hexadecanoyl-sn-glycero-3-phosphoethanolamine. The catalysed reaction is N-(acetyl)-sphing-4-enine + a 1,2-diacyl-sn-glycero-3-phosphocholine = 1-O-acyl-N-(acetyl)-sphing-4-enine + a 2-acyl-sn-glycero-3-phosphocholine. The enzyme catalyses 1-hexadecanoyl-2-(9Z-octadecenoyl)-sn-glycero-3-phosphocholine + N-(acetyl)-sphing-4-enine = 1-hexadecanoyl-N-(acetyl)-sphing-4-enine + 2-(9Z-octadecenoyl)-sn-glycero-3-phosphocholine. It catalyses the reaction 1-hexadecanoyl-2-(9Z,12Z-octadecadienoyl)-sn-glycero-3-phosphocholine + N-(acetyl)-sphing-4-enine = 2-(9Z,12Z-octadecadienoyl)-sn-glycero-3-phosphocholine + 1-hexadecanoyl-N-(acetyl)-sphing-4-enine. It carries out the reaction 1-hexadecanoyl-2-(5Z,8Z,11Z,14Z-eicosatetraenoyl)-sn-glycero-3-phosphocholine + N-(acetyl)-sphing-4-enine = 1-hexadecanoyl-N-(acetyl)-sphing-4-enine + 2-(5Z,8Z,11Z,14Z)-eicosatetraenoyl-sn-glycero-3-phosphocholine. The catalysed reaction is 1-hexadecanoyl-2-(4Z,7Z,10Z,13Z,16Z,19Z-docosahexaenoyl)-sn-glycero-3-phosphocholine + N-(acetyl)-sphing-4-enine = 2-(4Z,7Z,10Z,13Z,16Z,19Z-docosahexaenoyl)-sn-glycero-3-phosphocholine + 1-hexadecanoyl-N-(acetyl)-sphing-4-enine. The enzyme catalyses 1-hexadecanoyl-2-nonadioyl-sn-glycero-3-phosphocholine + N-(acetyl)-sphing-4-enine = 2-nonadioyl-sn-glycero-3-phosphocholine + 1-hexadecanoyl-N-(acetyl)-sphing-4-enine. It catalyses the reaction 1-octadecanoyl-2-(9Z-octadecenoyl)-sn-glycero-3-phosphocholine + N-(acetyl)-sphing-4-enine = 1-octadecanoyl-N-(acetyl)-sphing-4-enine + 2-(9Z-octadecenoyl)-sn-glycero-3-phosphocholine. It carries out the reaction 1-(9Z)-octadecenoyl-2-octadecanoyl-sn-glycero-3-phosphocholine + N-(acetyl)-sphing-4-enine = 2-octadecanoyl-sn-glycero-3-phosphocholine + 1-(9Z-octadecenoyl)-N-(acetyl)-sphing-4-enine. The catalysed reaction is 1-octadecanoyl-2-(5Z,8Z,11Z,14Z-eicosatetraenoyl)-sn-glycero-3-phosphocholine + N-(acetyl)-sphing-4-enine = 1-octadecanoyl-N-(acetyl)-sphing-4-enine + 2-(5Z,8Z,11Z,14Z)-eicosatetraenoyl-sn-glycero-3-phosphocholine. The enzyme catalyses 1-(9Z-octadecenoyl)-2-hexadecanoyl-sn-glycero-3-phosphocholine + N-(acetyl)-sphing-4-enine = 1-(9Z-octadecenoyl)-N-(acetyl)-sphing-4-enine + 2-hexadecanoyl-sn-glycero-3-phosphocholine. It catalyses the reaction N-(acetyl)-sphing-4-enine + a 1,2-diacyl-sn-glycero-3-phosphocholine = 1-O-acyl-N-(acetyl)-sphing-4-enine + a 1-acyl-sn-glycero-3-phosphocholine. It carries out the reaction 1-hexadecanoyl-2-(9Z-octadecenoyl)-sn-glycero-3-phosphocholine + N-(acetyl)-sphing-4-enine = 1-(9Z-octadecenoyl)-N-(acetyl)-sphing-4-enine + 1-hexadecanoyl-sn-glycero-3-phosphocholine. The catalysed reaction is 1-hexadecanoyl-2-(9Z,12Z-octadecadienoyl)-sn-glycero-3-phosphocholine + N-(acetyl)-sphing-4-enine = 1-(9Z,12Z-octadecadienoyl)-N-acetylsphing-4-enine + 1-hexadecanoyl-sn-glycero-3-phosphocholine. The enzyme catalyses 1-hexadecanoyl-2-(5Z,8Z,11Z,14Z-eicosatetraenoyl)-sn-glycero-3-phosphocholine + N-(acetyl)-sphing-4-enine = 1-(5Z,8Z,11Z,14Z)-eicosatetraenoyl-N-(acetyl)-sphing-4-enine + 1-hexadecanoyl-sn-glycero-3-phosphocholine. It catalyses the reaction 1-hexadecanoyl-2-(4Z,7Z,10Z,13Z,16Z,19Z-docosahexaenoyl)-sn-glycero-3-phosphocholine + N-(acetyl)-sphing-4-enine = 1-(4Z,7Z,10Z,13Z,16Z,19Z-docosahexaenoyl)-N-(acetyl)-sphing-4-enine + 1-hexadecanoyl-sn-glycero-3-phosphocholine. It carries out the reaction 1-octadecanoyl-2-(9Z-octadecenoyl)-sn-glycero-3-phosphocholine + N-(acetyl)-sphing-4-enine = 1-(9Z-octadecenoyl)-N-(acetyl)-sphing-4-enine + 1-octadecanoyl-sn-glycero-3-phosphocholine. The catalysed reaction is 1-octadecanoyl-2-(9Z,12Z)-octadecadienoyl-sn-glycero-3-phosphocholine + N-(acetyl)-sphing-4-enine = 1-(9Z,12Z-octadecadienoyl)-N-acetylsphing-4-enine + 1-octadecanoyl-sn-glycero-3-phosphocholine. The enzyme catalyses 1-(9Z-octadecenoyl)-2-hexadecanoyl-sn-glycero-3-phosphocholine + N-(acetyl)-sphing-4-enine = 1-hexadecanoyl-N-(acetyl)-sphing-4-enine + 1-(9Z-octadecenoyl)-sn-glycero-3-phosphocholine. It catalyses the reaction 1-(9Z)-octadecenoyl-2-octadecanoyl-sn-glycero-3-phosphocholine + N-(acetyl)-sphing-4-enine = 1-octadecanoyl-N-(acetyl)-sphing-4-enine + 1-(9Z-octadecenoyl)-sn-glycero-3-phosphocholine. It carries out the reaction 1,2-di-(9Z-octadecenoyl)-sn-glycero-3-phosphocholine + N-(acetyl)-sphing-4-enine = 1-(9Z-octadecenoyl)-N-(acetyl)-sphing-4-enine + 1-(9Z-octadecenoyl)-sn-glycero-3-phosphocholine. The catalysed reaction is 1-octadecanoyl-2-(5Z,8Z,11Z,14Z-eicosatetraenoyl)-sn-glycero-3-phosphocholine + N-(acetyl)-sphing-4-enine = 1-(5Z,8Z,11Z,14Z)-eicosatetraenoyl-N-(acetyl)-sphing-4-enine + 1-octadecanoyl-sn-glycero-3-phosphocholine. The enzyme catalyses a 1,2-diacyl-sn-glycero-3-phospho-L-serine + N-(acetyl)-sphing-4-enine = a 2-acyl-sn-glycero-3-phospho-L-serine + 1-O-acyl-N-(acetyl)-sphing-4-enine. It catalyses the reaction 1-octadecanoyl-2-(9Z-octadecenoyl)-sn-glycero-3-phospho-L-serine + N-(acetyl)-sphing-4-enine = 2-(9Z-octadecenoyl)-sn-glycero-3-phospho-L-serine + 1-octadecanoyl-N-(acetyl)-sphing-4-enine. It carries out the reaction a 1,2-diacyl-sn-glycero-3-phospho-L-serine + N-(acetyl)-sphing-4-enine = 1-O-acyl-N-(acetyl)-sphing-4-enine + a 1-acyl-sn-glycero-3-phospho-L-serine. The catalysed reaction is 1-octadecanoyl-2-(9Z-octadecenoyl)-sn-glycero-3-phospho-L-serine + N-(acetyl)-sphing-4-enine = 1-octadecanoyl-sn-glycero-3-phosphoserine + 1-(9Z-octadecenoyl)-N-(acetyl)-sphing-4-enine. The enzyme catalyses a 1,2-diacyl-sn-glycero-3-phospho-(1'-sn-glycerol) + N-(acetyl)-sphing-4-enine = 2-acyl-sn-glycero-3-phospho-(1'-sn-glycerol) + 1-O-acyl-N-(acetyl)-sphing-4-enine. It catalyses the reaction 1-octadecanoyl-2-(9Z-octadecenoyl)-sn-glycero-3-phospho-(1'-sn-glycerol) + N-(acetyl)-sphing-4-enine = 2-(9Z-octadecenoyl)-sn-glycero-3-phospho-(1'-sn-glycerol) + 1-octadecanoyl-N-(acetyl)-sphing-4-enine. It carries out the reaction a 1,2-diacyl-sn-glycero-3-phospho-(1'-sn-glycerol) + N-(acetyl)-sphing-4-enine = 1-O-acyl-N-(acetyl)-sphing-4-enine + 1-acyl-sn-glycero-3-phospho-(1'-sn-glycerol). The catalysed reaction is 1-octadecanoyl-2-(9Z-octadecenoyl)-sn-glycero-3-phospho-(1'-sn-glycerol) + N-(acetyl)-sphing-4-enine = 1-octadecanoyl-sn-glycero-3-phospho-(1'-sn-glycerol) + 1-(9Z-octadecenoyl)-N-(acetyl)-sphing-4-enine. The enzyme catalyses an N-acylethanolamine + a 1,2-diacyl-sn-glycero-3-phosphocholine = 2-(acylamino)ethyl fatty acid + a 2-acyl-sn-glycero-3-phosphocholine. It catalyses the reaction an N-acylethanolamine + a 1,2-diacyl-sn-glycero-3-phosphocholine = 2-(acylamino)ethyl fatty acid + a 1-acyl-sn-glycero-3-phosphocholine. It carries out the reaction N-(5Z,8Z,11Z,14Z-eicosatetraenoyl)-ethanolamine + 1,2-di-(9Z-octadecenoyl)-sn-glycero-3-phosphocholine = 2-[(5Z,8Z,11Z,14Z)-eicosatetraenoylamino]ethyl (9Z)-octadecenoate + (9Z-octadecenoyl)-sn-glycero-3-phosphocholine. The catalysed reaction is N-(9Z-octadecenoyl) ethanolamine + 1,2-di-(9Z-octadecenoyl)-sn-glycero-3-phosphocholine = 2-[(9Z)-octadecenoylamino]ethyl (9Z)-octadecenoate + (9Z-octadecenoyl)-sn-glycero-3-phosphocholine. The enzyme catalyses a 3-acyl-sn-glycerol + a 1,2-diacyl-sn-glycero-3-phosphocholine = a 1,3-diacylglycerol + a 1-acyl-sn-glycero-3-phosphocholine. It catalyses the reaction a 3-acyl-sn-glycerol + a 1,2-diacyl-sn-glycero-3-phosphocholine = a 1,3-diacylglycerol + a 2-acyl-sn-glycero-3-phosphocholine. It carries out the reaction 3-(9Z-octadecenoyl)-sn-glycerol + 1,2-di-(9Z-octadecenoyl)-sn-glycero-3-phosphocholine = 1,3-di-(9Z-octadecenoyl)-glycerol + (9Z-octadecenoyl)-sn-glycero-3-phosphocholine. The catalysed reaction is 3-hexadecanoyl-sn-glycerol + 1,2-di-(9Z-octadecenoyl)-sn-glycero-3-phosphocholine = 1-(9Z)-octadecenoyl-3-hexadecanoyl-sn-glycerol + (9Z-octadecenoyl)-sn-glycero-3-phosphocholine. The enzyme catalyses a 1-acyl-sn-glycerol + a 1,2-diacyl-sn-glycero-3-phosphocholine = a 1,3-diacylglycerol + a 2-acyl-sn-glycero-3-phosphocholine. It catalyses the reaction a 1-acyl-sn-glycerol + a 1,2-diacyl-sn-glycero-3-phosphocholine = a 1,3-diacylglycerol + a 1-acyl-sn-glycero-3-phosphocholine. It carries out the reaction 1-(9Z-octadecenoyl)-sn-glycerol + 1,2-di-(9Z-octadecenoyl)-sn-glycero-3-phosphocholine = 1,3-di-(9Z-octadecenoyl)-glycerol + (9Z-octadecenoyl)-sn-glycero-3-phosphocholine. The catalysed reaction is 1-hexadecanoyl-sn-glycerol + 1,2-di-(9Z-octadecenoyl)-sn-glycero-3-phosphocholine = 1-hexadecanoyl-3-(9Z)-octadecenoyl-sn-glycerol + (9Z-octadecenoyl)-sn-glycero-3-phosphocholine. The enzyme catalyses a 2-acylglycerol + a 1,2-diacyl-sn-glycero-3-phosphocholine = a 1,2-diacylglycerol + a 2-acyl-sn-glycero-3-phosphocholine. It catalyses the reaction a 2-acylglycerol + a 1,2-diacyl-sn-glycero-3-phosphocholine = a 1,2-diacylglycerol + a 1-acyl-sn-glycero-3-phosphocholine. It carries out the reaction 2-hexadecanoylglycerol + 1,2-di-(9Z-octadecenoyl)-sn-glycero-3-phosphocholine = 1-(9Z)-octadecenoyl-2-hexadecanoylglycerol + (9Z-octadecenoyl)-sn-glycero-3-phosphocholine. The catalysed reaction is 1-O-alkylglycerol + a 1,2-diacyl-sn-glycero-3-phosphocholine = 1-O-alkyl-3-acylglycerol + a 1-acyl-sn-glycero-3-phosphocholine. The enzyme catalyses 1-O-alkylglycerol + a 1,2-diacyl-sn-glycero-3-phosphocholine = 1-O-alkyl-3-acylglycerol + a 2-acyl-sn-glycero-3-phosphocholine. It catalyses the reaction 1-O-hexadecylglycerol + 1,2-di-(9Z-octadecenoyl)-sn-glycero-3-phosphocholine = 1-O-hexadecyl-3-(9Z)-octadecenoylglycerol + (9Z-octadecenoyl)-sn-glycero-3-phosphocholine. It carries out the reaction 1-O-alkyl-2-acyl-sn-glycerol + a 1,2-diacyl-sn-glycero-3-phosphocholine = 1-O-alkyl-2,3-diacyl-sn-glycerol + a 2-acyl-sn-glycero-3-phosphocholine. The catalysed reaction is 1-O-alkyl-2-acyl-sn-glycerol + a 1,2-diacyl-sn-glycero-3-phosphocholine = 1-O-alkyl-2,3-diacyl-sn-glycerol + a 1-acyl-sn-glycero-3-phosphocholine. The enzyme catalyses 1-O-hexadecyl-2-acetyl-sn-glycerol + 1,2-di-(9Z-octadecenoyl)-sn-glycero-3-phosphocholine = 1-O-hexadecyl-2-acetyl-3-(9Z)-octadecenoyl-sn-glycerol + (9Z-octadecenoyl)-sn-glycero-3-phosphocholine. It catalyses the reaction 1-O-hexadecyl-2-O-methyl-sn-glycerol + 1,2-di-(9Z-octadecenoyl)-sn-glycero-3-phosphocholine = 1-O-hexadecyl-2-O-methyl-3-(9Z)-octadecenoyl-sn-glycerol + (9Z-octadecenoyl)-sn-glycero-3-phosphocholine. It carries out the reaction a 1,2-diacyl-sn-glycero-3-phosphoethanolamine + H2O = a 1-acyl-sn-glycero-3-phosphoethanolamine + a fatty acid + H(+). The catalysed reaction is 1-acyl-2-(5Z,8Z,11Z,14Z)-eicosatetraenoyl-sn-glycero-3-phosphoethanolamine + H2O = a 1-acyl-sn-glycero-3-phosphoethanolamine + (5Z,8Z,11Z,14Z)-eicosatetraenoate + H(+). The enzyme catalyses a 1,2-diacyl-sn-glycero-3-phospho-(1'-sn-glycerol) + H2O = 1-acyl-sn-glycero-3-phospho-(1'-sn-glycerol) + a fatty acid + H(+). It catalyses the reaction 1-hexadecanoyl-2-(9Z-octadecenoyl)-sn-glycero-3-phospho-(1'-sn-glycerol) + H2O = 1-hexadecanoyl-sn-glycero-3-phospho-(1'-sn-glycerol) + (9Z)-octadecenoate + H(+). It carries out the reaction a 1,2-diacyl-sn-glycero-3-phospho-(1'-sn-glycerol) + H2O = 2-acyl-sn-glycero-3-phospho-(1'-sn-glycerol) + a fatty acid + H(+). The catalysed reaction is 1-hexadecanoyl-2-(9Z-octadecenoyl)-sn-glycero-3-phospho-(1'-sn-glycerol) + H2O = 2-(9Z-octadecenoyl)-sn-glycero-3-phospho-(1'-sn-glycerol) + hexadecanoate + H(+). Its activity is regulated as follows. Transacylase activity is inhibited by MJ33. In terms of biological role, has dual calcium-independent phospholipase and O-acyltransferase activities with a potential role in glycerophospholipid homeostasis and remodeling of acyl groups of lipophilic alcohols present in acidic cellular compartments. Catalyzes hydrolysis of the ester bond of the fatty acyl group attached at sn-1 or sn-2 position of phospholipids (phospholipase A1 or A2 activity) and transfer it to the hydroxyl group at the first carbon of lipophilic alcohols (O-acyltransferase activity). Among preferred fatty acyl donors are phosphatidylcholines, phosphatidylethanolamines, phosphatidylglycerols and phosphatidylserines. Favors sn-2 over sn-1 deacylation of unsaturated fatty acyl groups of phosphatidylcholines, phosphatidylethanolamines, and phosphatidylglycerols. Among preferred fatty acyl acceptors are natural lipophilic alcohols including short-chain ceramide N-acetyl-sphingosine (C2 ceramide), alkylacylglycerols, monoacylglycerols, and acylethanolamides such as anandamide and oleoylethanolamide. Selectively hydrolyzes the sn-1 fatty acyl group of truncated oxidized phospholipids and may play a role in detoxification of reactive oxidized phospholipids during oxidative stress. Required for normal phospholipid degradation in alveolar macrophages with potential implications in the clearance of pulmonary surfactant, which is mainly composed of dipalmitoylphosphatidylcholine (1,2-dihexadecanoyl-sn-glycero-3-phosphocholine). Involved in the first step of bis(monoacylglycero)phosphate (BMP) de novo synthesis from phosphatidylglycerol (1,2-diacyl-sn-glycero-3-phospho-(1'-sn-glycerol), PG). BMP is an important player in cargo sorting and degradation, regulation of cellular cholesterol levels and intercellular communication. At neutral pH, hydrolyzes the sn-1 fatty acyl group of the lysophosphatidylcholines. The protein is Lysosomal phospholipase A and acyltransferase (Pla2g15) of Rattus norvegicus (Rat).